The sequence spans 133 residues: Small ribosomal subunit protein uS8c (133 aa).

Belongs to the universal ribosomal protein uS8 family. Part of the 30S ribosomal subunit.

The protein resides in the plastid. It localises to the chloroplast. Functionally, one of the primary rRNA binding proteins, it binds directly to 16S rRNA central domain where it helps coordinate assembly of the platform of the 30S subunit. The polypeptide is Small ribosomal subunit protein uS8c (rps8) (Cyanidium caldarium (Red alga)).